The chain runs to 463 residues: MAIPPEVHSGLLSAGCGPGSLLVAAQQWQELSDQYALACAELGQLLGEVQASSWQGTAATQYVAAHGPYLAWLEQTAINSAVTAAQHVAAAAAYCSALAAMPTPAELAANHAIHGVLIATNFFGINTVPIALNEADYVRMWLQAADTMAAYQAVADAATVAVPSTQPAPPIRAPGGDAADTRLDVLSSIGQLIRDILDFIANPYKYFLEFFEQFGFSPAVTVVLALVALQLYDFLWYPYYASYGLLLLPFFTPTLSALTALSALIHLLNLPPAGLLPIAAALGPGDQWGANLAVAVTPATAAVPGGSPPTSNPAPAAPSSNSVGSASAAPGISYAVPGLAPPGVSSGPKAGTKSPDTAADTLATAGAARPGLARAHRRKRSESGVGIRGYRDEFLDATATVDAATDVPAPANAAGSQGAGTLGFAGTAPTTSGAAAGMVQLSSHSTSTTVPLLPTTWTTDAEQ.

6 consecutive transmembrane segments (helical) span residues 3–23 (IPPE…SLLV), 88–108 (VAAA…AELA), 112–132 (AIHG…PIAL), 216–236 (FSPA…DFLW), 245–265 (LLLL…SALI), and 276–296 (LPIA…AVAV). The interval 303–322 (VPGGSPPTSNPAPAAPSSNS) is disordered. Over residues 306–316 (GSPPTSNPAPA) the composition is skewed to pro residues. 2 helical membrane passes run 323–343 (VGSA…APPG) and 419–439 (AGTL…AGMV).

It belongs to the mycobacterial PPE family.

It localises to the cell membrane. This is an uncharacterized protein from Mycobacterium tuberculosis (strain CDC 1551 / Oshkosh).